We begin with the raw amino-acid sequence, 825 residues long: Tuftelin-interacting protein 11 (825 aa).

Residues 1–135 are disordered; it reads MSMSHLYGKD…RTFAGGIKSN (135 aa). The span at 11–25 shows a compositional bias: acidic residues; sequence EDSDGVEMENFEITD. 2 stretches are compositionally biased toward basic and acidic residues: residues 41 to 61 and 85 to 114; these read QTKE…DERP and PAAE…EAKK. Residues 122-135 show a composition bias toward polar residues; the sequence is KPSQRTFAGGIKSN. The region spanning 145–191 is the G-patch domain; that stretch reads TKGIGQKLLQKMGYVQGRGLGKNAQGIIAPIEAKQRKGKGAVGAYGS.

Belongs to the TFP11/STIP family. Identified in the spliceosome C complex.

It localises to the nucleus. Functionally, involved in pre-mRNA splicing, specifically in spliceosome disassembly during late-stage splicing events. The chain is Tuftelin-interacting protein 11 (tfip11) from Xenopus tropicalis (Western clawed frog).